The following is a 463-amino-acid chain: Dihydrolipoyllysine-residue succinyltransferase component of 2-oxoglutarate dehydrogenase complex, mitochondrial (463 aa).

The region spanning 73–148 (STSIEVPPMA…TVGEELAQVE (76 aa)) is the Lipoyl-binding domain. Position 114 is an N6-lipoyllysine (Lys114). Residues 144-237 (LAQVEPGEAP…FTPFPRTETR (94 aa)) form a disordered region. The span at 148-157 (EPGEAPAEGS) shows a compositional bias: low complexity. The span at 184–212 (TASKKEAAPKKEAAPKKEVTEPKKADQPK) shows a compositional bias: basic and acidic residues. Repeat copies occupy residues 185 to 190 (ASKKEA), 191 to 196 (APKKEA), and 197 to 202 (APKKEV). A 4 X 6 AA approximate tandem repeats of A-[SP]-K-K-E-[AV] region spans residues 185–209 (ASKKEAAPKKEAAPKKEVTEPKKAD). One copy of the 4; approximate repeat lies at 204-209 (EPKKAD). Position 340 is a phosphothreonine (Thr340). Residues His435 and Asp439 contribute to the active site.

It belongs to the 2-oxoacid dehydrogenase family. In terms of assembly, component of the 2-oxoglutarate dehydrogenase complex (OGDC), also called alpha-ketoglutarate dehydrogenase (KGDH) complex. The copmplex is composed of the catalytic subunits OGDH (2-oxoglutarate dehydrogenase KGD1; also called E1 subunit), DLST (dihydrolipoamide succinyltransferase KGD2; also called E2 subunit) and DLD (dihydrolipoamide dehydrogenase LPD1; also called E3 subunit), and the assembly factor KGD4. It depends on (R)-lipoate as a cofactor.

The protein localises to the mitochondrion. It catalyses the reaction N(6)-[(R)-dihydrolipoyl]-L-lysyl-[protein] + succinyl-CoA = N(6)-[(R)-S(8)-succinyldihydrolipoyl]-L-lysyl-[protein] + CoA. It participates in amino-acid degradation; L-lysine degradation via saccharopine pathway; glutaryl-CoA from L-lysine: step 6/6. Functionally, the 2-oxoglutarate dehydrogenase complex catalyzes the overall conversion of 2-oxoglutarate to succinyl-CoA and CO(2). It contains multiple copies of three enzymatic components: 2-oxoglutarate dehydrogenase (E1), dihydrolipoamide succinyltransferase (E2) and lipoamide dehydrogenase (E3). This Saccharomyces cerevisiae (strain ATCC 204508 / S288c) (Baker's yeast) protein is Dihydrolipoyllysine-residue succinyltransferase component of 2-oxoglutarate dehydrogenase complex, mitochondrial (KGD2).